The following is a 244-amino-acid chain: MKVIIVEDEFLAQQELSWLIKEHSQMEIVGTFDDGLDVLKFLQHNRVDAIFLDINIPSLDGVLLAQNISQFAHKPFIVFITAWKEHAVEAFELEAFDYILKPYQESRITGMLQKLEAAWQQQQTSSTPAATVTRENDTINLVKDERIIVTPINDIYYAEAHEKMTFVYTRRESYVMPMNITEFCSKLPPSHFFRCHRSFCVNLNKIREIEPWFNNTYILRLKDLDFEVPVSRSKVKEFRQLMHL.

Positions 2 to 116 (KVIIVEDEFL…RITGMLQKLE (115 aa)) constitute a Response regulatory domain. The residue at position 53 (Asp53) is a 4-aspartylphosphate. The HTH LytTR-type domain maps to 139–244 (INLVKDERII…VKEFRQLMHL (106 aa)).

Phosphorylated by YpdA.

It is found in the cytoplasm. In terms of biological role, member of the two-component regulatory system YpdA/YpdB. YpdB regulates expression of yhjX by binding to its promoter region. The protein is Transcriptional regulatory protein YpdB (ypdB) of Escherichia coli O157:H7.